A 583-amino-acid chain; its full sequence is CD166 antigen (583 aa).

An N-terminal signal peptide occupies residues 1–27; the sequence is MESKGASSCRLLFCLLISATVFRPGLG. Ig-like V-type domains follow at residues 28-120 and 125-234; these read WYTV…TEDN and PTIV…KTIH. At 28-527 the chain is on the extracellular side; sequence WYTVNSAYGD…NREKVNDQAK (500 aa). 2 disulfide bridges follow: cysteine 43/cysteine 113 and cysteine 157/cysteine 220. 9 N-linked (GlcNAc...) asparagine glycosylation sites follow: asparagine 91, asparagine 95, asparagine 167, asparagine 265, asparagine 306, asparagine 361, asparagine 457, asparagine 480, and asparagine 499. Ig-like C2-type domains lie at 245–328, 333–409, and 416–501; these read PTEQ…TAIT, DLSL…ESLT, and PQIK…LNVS. Intrachain disulfides connect cysteine 270–cysteine 313, cysteine 354–cysteine 392, and cysteine 435–cysteine 485. The chain crosses the membrane as a helical span at residues 528–549; the sequence is LIVGIVVGLLLAALVAGVVYWL. Over 550-583 the chain is Cytoplasmic; sequence YMKKSKTASKHVNKDLGNMEENKKLEENNHKTEA. The interval 562-583 is disordered; that stretch reads NKDLGNMEENKKLEENNHKTEA. The segment covering 569 to 583 has biased composition (basic and acidic residues); that stretch reads EENKKLEENNHKTEA.

Homodimer. Interacts (via extracellular domain) with CD6 (via extracellular domain). Homodimerization and interaction with CD6 involve the same region and cannot occur simultaneously. The affinity for CD6 is much higher than the affinity for self-association. Interacts (via glycosylated extracellular domain) with LGALS1 and LGALS3. Interaction with LGALS1 or LGALS3 inhibits interaction with CD6. In terms of processing, glycosylated. Detected on hematopoietic stem cells derived from umbilical cord blood. Detected on lymph vessel endothelial cells, skin and tonsil. Detected on peripheral blood monocytes. Detected on monocyte-derived dendritic cells (at protein level). Detected at low levels in spleen, placenta, liver. Expressed by activated T-cells, B-cells, monocytes and thymic epithelial cells. Isoform 1 and isoform 3 are detected in vein and artery endothelial cells, astrocytes, keratinocytes and artery smooth muscle cells. Expressed by neurons in the brain. Restricted expression in tumor cell lines. Detected in highly metastasizing melanoma cell lines.

Its subcellular location is the cell membrane. It is found in the cell projection. The protein localises to the axon. It localises to the dendrite. The protein resides in the secreted. In terms of biological role, cell adhesion molecule that mediates both heterotypic cell-cell contacts via its interaction with CD6, as well as homotypic cell-cell contacts. Promotes T-cell activation and proliferation via its interactions with CD6. Contributes to the formation and maturation of the immunological synapse via its interactions with CD6. Mediates homotypic interactions with cells that express ALCAM. Acts as a ligand for the LILRB4 receptor, enhancing LILRB4-mediated inhibition of T cell proliferation. Required for normal hematopoietic stem cell engraftment in the bone marrow. Mediates attachment of dendritic cells onto endothelial cells via homotypic interaction. Inhibits endothelial cell migration and promotes endothelial tube formation via homotypic interactions. Required for normal organization of the lymph vessel network. Required for normal hematopoietic stem cell engraftment in the bone marrow. Plays a role in hematopoiesis; required for normal numbers of hematopoietic stem cells in bone marrow. Promotes in vitro osteoblast proliferation and differentiation. Promotes neurite extension, axon growth and axon guidance; axons grow preferentially on surfaces that contain ALCAM. Mediates outgrowth and pathfinding for retinal ganglion cell axons. Inhibits activities of membrane-bound isoforms by competing for the same interaction partners. Inhibits cell attachment via homotypic interactions. Promotes endothelial cell migration. Inhibits endothelial cell tube formation. The polypeptide is CD166 antigen (ALCAM) (Homo sapiens (Human)).